The primary structure comprises 303 residues: L(+)-tartrate dehydratase subunit alpha (303 aa).

Positions 71, 190, and 277 each coordinate iron-sulfur cluster.

The protein belongs to the class-I fumarase family. In terms of assembly, tetramer of two alpha and two beta subunits. It depends on iron-sulfur cluster as a cofactor.

It catalyses the reaction (2R,3R)-tartrate = oxaloacetate + H2O. The sequence is that of L(+)-tartrate dehydratase subunit alpha (ttdA) from Escherichia coli O6:K15:H31 (strain 536 / UPEC).